The primary structure comprises 447 residues: Phosphoglucosamine mutase (447 aa).

The Phosphoserine intermediate role is filled by S88. Mg(2+) contacts are provided by S88, D231, D233, and D235. A Phosphoserine modification is found at S88.

Belongs to the phosphohexose mutase family. As to quaternary structure, monomer. Also forms large aggregates. Mg(2+) is required as a cofactor. In terms of processing, activated by phosphorylation. Glucose-1,6-bisphosphate or fructose-1,6-bisphosphate can activate the enzyme in vitro. However, since glucose-1,6-bisphosphate is not believed to form in methanogens, the physiologically relevant activator might be a serine kinase protein.

The enzyme catalyses alpha-D-glucosamine 1-phosphate = D-glucosamine 6-phosphate. In terms of biological role, catalyzes the conversion of glucosamine-6-phosphate to glucosamine-1-phosphate. Also catalyzes the isomerization of glucose-1-phosphate to glucose-6-phosphate, but at a 5-fold lower rate. In Methanococcus maripaludis (strain DSM 14266 / JCM 13030 / NBRC 101832 / S2 / LL), this protein is Phosphoglucosamine mutase (glmM).